The chain runs to 312 residues: Olfactory receptor 1493 (312 aa).

The Extracellular segment spans residues 1 to 23 (MNNKTVITHFLLLGLPIPPEHQQ). Asparagine 3 is a glycosylation site (N-linked (GlcNAc...) asparagine). The chain crosses the membrane as a helical span at residues 24–48 (LFFALFLIMYLTTFLGNLLIVVLVQ). The Cytoplasmic portion of the chain corresponds to 49 to 55 (LDSHLHT). A helical membrane pass occupies residues 56–77 (PMYLFLSNLSFSDLCFSSVTML). Over 78–98 (KLLQNIQSQVPSISYAGCLTQ) the chain is Extracellular. A disulfide bond links cysteine 95 and cysteine 187. The helical transmembrane segment at 99–118 (IFFFLLFGYLGNFLLVAMAY) threads the bilayer. At 119-137 (DRYVAICFPLHYTNIMSHK) the chain is on the cytoplasmic side. A helical membrane pass occupies residues 138–156 (LCTCLLLVFWIMTSSHAMM). At 157–194 (HTLLAARLSFCENNVLLNFFCDLFVLLKLACSDTYVNE) the chain is on the extracellular side. A helical transmembrane segment spans residues 195-217 (LMIHIMGVIIIVIPFVLIVISYA). Topologically, residues 218-234 (KIISSILKVPSTQSIHK) are cytoplasmic. Residues 235–258 (VFSTCGSHLSVVSLFYGTIIGLYL) form a helical membrane-spanning segment. The Extracellular portion of the chain corresponds to 259-270 (CPSGDNFSLKGS). The chain crosses the membrane as a helical span at residues 271-290 (AMAMMYTVVTPMLNPFIYSL). Over 291–312 (RNRDMKQALIRVTCSKKISLPW) the chain is Cytoplasmic.

The protein belongs to the G-protein coupled receptor 1 family. In terms of tissue distribution, olfactory epithelium.

It is found in the cell membrane. In terms of biological role, odorant receptor. This chain is Olfactory receptor 1493 (Olr1493), found in Rattus norvegicus (Rat).